A 479-amino-acid chain; its full sequence is PTS system sucrose-specific EIIBC component (479 aa).

The 84-residue stretch at 4–87 (PAVAKELLTL…AKLTGMSEMS (84 aa)) folds into the PTS EIIB type-1 domain. The active-site Phosphocysteine intermediate; for EIIB activity is the Cys-26. 11 helical membrane passes run 112–132 (IFVPIIPAIVAGGLLMGIYNL), 158–178 (MINTFANAPFVYLPILLAFSA), 182–202 (FGGNPYLGAALGMLMVHPDLL), 204–224 (GWGFGGASVSGNIPVWNILGF), 232–252 (QGSVLPVLVSAFILAKVELGL), 264–284 (LTPLLAIFIAGLLTFTVVGPF), 303–323 (AGFVGGAVFGLIYAPFVITGM), 345–365 (FIFPIAAMSNVSQGAAALAVG), 376–396 (IAIPSGVTGLLGITEPAMFGV), 403–423 (PFIAAVCAAALSSAFITMFNV), and 448–468 (IAGMVIAFLTAFVLTIVLGIG). Positions 120-477 (IVAGGLLMGI…GDRAKVGKKA (358 aa)) constitute a PTS EIIC type-1 domain.

The protein resides in the cell inner membrane. The enzyme catalyses N(pros)-phospho-L-histidyl-[protein](out) + sucrose = sucrose 6(G)-phosphate(in) + L-histidyl-[protein]. In terms of biological role, the phosphoenolpyruvate-dependent sugar phosphotransferase system (sugar PTS), a major carbohydrate active transport system, catalyzes the phosphorylation of incoming sugar substrates concomitantly with their translocation across the cell membrane. This system is involved in sucrose transport. This Vibrio alginolyticus protein is PTS system sucrose-specific EIIBC component.